Consider the following 268-residue polypeptide: 4-hydroxy-tetrahydrodipicolinate reductase (268 aa).

Residues 10–15 (GASGRM) and Asp36 each bind NAD(+). Residue Arg37 participates in NADP(+) binding. NAD(+)-binding positions include 99 to 101 (GTT) and 123 to 126 (SANM). Residue His156 is the Proton donor/acceptor of the active site. His157 serves as a coordination point for (S)-2,3,4,5-tetrahydrodipicolinate. The active-site Proton donor is Lys160. 166 to 167 (GT) contacts (S)-2,3,4,5-tetrahydrodipicolinate.

The protein belongs to the DapB family.

It is found in the cytoplasm. The enzyme catalyses (S)-2,3,4,5-tetrahydrodipicolinate + NAD(+) + H2O = (2S,4S)-4-hydroxy-2,3,4,5-tetrahydrodipicolinate + NADH + H(+). It catalyses the reaction (S)-2,3,4,5-tetrahydrodipicolinate + NADP(+) + H2O = (2S,4S)-4-hydroxy-2,3,4,5-tetrahydrodipicolinate + NADPH + H(+). Its pathway is amino-acid biosynthesis; L-lysine biosynthesis via DAP pathway; (S)-tetrahydrodipicolinate from L-aspartate: step 4/4. Catalyzes the conversion of 4-hydroxy-tetrahydrodipicolinate (HTPA) to tetrahydrodipicolinate. The protein is 4-hydroxy-tetrahydrodipicolinate reductase of Burkholderia mallei (strain NCTC 10247).